Consider the following 337-residue polypeptide: tRNA N(3)-cytidine methyltransferase METTL2 (337 aa).

W66, Y70, G140, D165, D191, and I212 together coordinate S-adenosyl-L-methionine.

The protein belongs to the methyltransferase superfamily. METL family. In terms of assembly, monomer.

The protein localises to the cytoplasm. The enzyme catalyses cytidine(32) in tRNA(Thr) + S-adenosyl-L-methionine = N(3)-methylcytidine(32) in tRNA(Thr) + S-adenosyl-L-homocysteine + H(+). The catalysed reaction is cytidine(32) in tRNA(Arg)(CCU) + S-adenosyl-L-methionine = N(3)-methylcytidine(32) in tRNA(Arg)(CCU) + S-adenosyl-L-homocysteine + H(+). Its function is as follows. S-adenosyl-L-methionine-dependent methyltransferase that mediates N(3)-methylcytidine modification of residue 32 of the tRNA anticodon loop of tRNA(Thr)(UGU) and tRNA(Arg)(CCU). N(3)-methylcytidine methylation by mettl2 requires the N6-threonylcarbamoylation of tRNA (t6A37) by the EKC/KEOPS complex as prerequisite. This Xenopus tropicalis (Western clawed frog) protein is tRNA N(3)-cytidine methyltransferase METTL2 (mettl2).